We begin with the raw amino-acid sequence, 137 residues long: ATP synthase epsilon chain, chloroplastic (137 aa).

This sequence belongs to the ATPase epsilon chain family. As to quaternary structure, F-type ATPases have 2 components, CF(1) - the catalytic core - and CF(0) - the membrane proton channel. CF(1) has five subunits: alpha(3), beta(3), gamma(1), delta(1), epsilon(1). CF(0) has three main subunits: a, b and c.

The protein localises to the plastid. Its subcellular location is the chloroplast thylakoid membrane. Its function is as follows. Produces ATP from ADP in the presence of a proton gradient across the membrane. This is ATP synthase epsilon chain, chloroplastic from Oryza nivara (Indian wild rice).